A 102-amino-acid polypeptide reads, in one-letter code: Small ribosomal subunit protein uS10 (102 aa).

It belongs to the universal ribosomal protein uS10 family. Part of the 30S ribosomal subunit.

Involved in the binding of tRNA to the ribosomes. The protein is Small ribosomal subunit protein uS10 of Beijerinckia indica subsp. indica (strain ATCC 9039 / DSM 1715 / NCIMB 8712).